A 164-amino-acid chain; its full sequence is Lipoprotein signal peptidase (164 aa).

4 helical membrane-spanning segments follow: residues 11-31, 41-61, 64-84, and 92-112; these read YWVL…AVLS, VIPS…FSFL, QGGW…AYLV, and FATL…GNVI. Residues Asp122 and Asp140 contribute to the active site. A helical membrane pass occupies residues 132–152; sequence FYPAFNIADSFICVGAVLAVL.

This sequence belongs to the peptidase A8 family.

The protein localises to the cell inner membrane. It carries out the reaction Release of signal peptides from bacterial membrane prolipoproteins. Hydrolyzes -Xaa-Yaa-Zaa-|-(S,diacylglyceryl)Cys-, in which Xaa is hydrophobic (preferably Leu), and Yaa (Ala or Ser) and Zaa (Gly or Ala) have small, neutral side chains.. The protein operates within protein modification; lipoprotein biosynthesis (signal peptide cleavage). In terms of biological role, this protein specifically catalyzes the removal of signal peptides from prolipoproteins. The chain is Lipoprotein signal peptidase from Neisseria meningitidis serogroup C (strain 053442).